The following is a 651-amino-acid chain: Maternal embryonic leucine zipper kinase (651 aa).

One can recognise a Protein kinase domain in the interval 11–263; the sequence is YELHETIGTG…MKNLLNHPWI (253 aa). ATP contacts are provided by residues 17 to 25 and K40; that span reads IGTGGFAKV. T56 carries the post-translational modification Phosphothreonine; by autocatalysis. Residue D132 is the Proton acceptor of the active site. Phosphotyrosine; by autocatalysis is present on Y163. T167 is subject to Phosphothreonine; by autocatalysis. 2 positions are modified to phosphoserine; by autocatalysis: S171 and S253. Positions 282-321 are UBA-like; the sequence is LDDDCVTELSVHHRNNRQTMEDLISLWQYDHLTATYLLLL. Residues 326–651 are autoinhibitory region; that stretch reads RGKPVRLRLS…VEDILSSCKV (326 aa). Phosphoserine; by autocatalysis is present on residues S336, S343, and S356. Residue Y367 is modified to Phosphotyrosine. S391 carries the phosphoserine; by autocatalysis modification. The residue at position 398 (T398) is a Phosphothreonine; by autocatalysis. S407 carries the phosphoserine; by autocatalysis modification. Residue T409 is modified to Phosphothreonine. Position 431 is a phosphoserine; by autocatalysis (S431). T478 carries the post-translational modification Phosphothreonine. T494 is subject to Phosphothreonine; by autocatalysis. S498 is modified (phosphoserine). The residue at position 505 (S505) is a Phosphoserine; by autocatalysis. T518 bears the Phosphothreonine mark. S529 is modified (phosphoserine; by autocatalysis). S529 is modified (phosphoserine). Position 539 is a phosphothreonine; by autocatalysis (T539). A KA1 domain is found at 602-651; it reads SDFGKVTMQFELEVCQLQKPDVVGIRRQRLKGDAWVYKRLVEDILSSCKV.

Belongs to the protein kinase superfamily. CAMK Ser/Thr protein kinase family. SNF1 subfamily. Monomer. Interacts with ZNF622 and PPP1R8. In terms of processing, autophosphorylated: autophosphorylation of the T-loop at Thr-167 and Ser-171 is required for activation. Thr-478 phosphorylation during mitosis promotes interaction with PPP1R8. Expressed in placenta, kidney, thymus, testis, ovary and intestine.

It is found in the cell membrane. It catalyses the reaction L-tyrosyl-[protein] + ATP = O-phospho-L-tyrosyl-[protein] + ADP + H(+). The enzyme catalyses L-seryl-[protein] + ATP = O-phospho-L-seryl-[protein] + ADP + H(+). It carries out the reaction L-threonyl-[protein] + ATP = O-phospho-L-threonyl-[protein] + ADP + H(+). With respect to regulation, activated by autophosphorylation of the T-loop at Thr-167 and Ser-171: in contrast to other members of the SNF1 subfamily, phosphorylation at Thr-167 is not mediated by STK11/LKB1 but via autophosphorylation instead. Inhibited by calcium-binding. Kinase activity is also regulated by reducing agents: dithiothreitol (DTT) or reduced glutathione are required for kinase activity in vitro; such dependence is however not due to the presence of disulfide bonds. In terms of biological role, serine/threonine-protein kinase involved in various processes such as cell cycle regulation, self-renewal of stem cells, apoptosis and splicing regulation. Has a broad substrate specificity; phosphorylates BCL2L14, CDC25B, MAP3K5/ASK1 and ZNF622. Acts as an activator of apoptosis by phosphorylating and activating MAP3K5/ASK1. Acts as a regulator of cell cycle, notably by mediating phosphorylation of CDC25B, promoting localization of CDC25B to the centrosome and the spindle poles during mitosis. Plays a key role in cell proliferation and carcinogenesis. Required for proliferation of embryonic and postnatal multipotent neural progenitors. Phosphorylates and inhibits BCL2L14, possibly leading to affect mammary carcinogenesis by mediating inhibition of the pro-apoptotic function of BCL2L14. Also involved in the inhibition of spliceosome assembly during mitosis by phosphorylating ZNF622, thereby contributing to its redirection to the nucleus. May also play a role in primitive hematopoiesis. The protein is Maternal embryonic leucine zipper kinase (MELK) of Homo sapiens (Human).